We begin with the raw amino-acid sequence, 27 residues long: Putative phosphoglycerate kinase (27 aa).

It belongs to the phosphoglycerate kinase family. Monomer. Mg(2+) is required as a cofactor.

It catalyses the reaction (2R)-3-phosphoglycerate + ATP = (2R)-3-phospho-glyceroyl phosphate + ADP. This Pinus strobus (Eastern white pine) protein is Putative phosphoglycerate kinase.